The following is a 121-amino-acid chain: Large ribosomal subunit protein bL17 (121 aa).

The protein belongs to the bacterial ribosomal protein bL17 family. In terms of assembly, part of the 50S ribosomal subunit. Contacts protein L32.

This chain is Large ribosomal subunit protein bL17, found in Mycoplasmopsis agalactiae (strain NCTC 10123 / CIP 59.7 / PG2) (Mycoplasma agalactiae).